Consider the following 200-residue polypeptide: Glycerol-3-phosphate acyltransferase (200 aa).

The next 6 helical transmembrane spans lie at 9-29 (IIIGAYLIGSIPFGFLLAYFW), 54-74 (VPGMIVLILDMIKGISAVLLA), 81-101 (DIAVLGVALAVMAGHSWPLWL), 112-132 (GAGAILALSPMPLLLAFLVWL), 140-160 (YVSLGSILGAVSLPIWMALLN), and 165-185 (YLIFSVLVASFAVWKHSSNIG).

This sequence belongs to the PlsY family. In terms of assembly, probably interacts with PlsX.

It localises to the cell membrane. It carries out the reaction an acyl phosphate + sn-glycerol 3-phosphate = a 1-acyl-sn-glycero-3-phosphate + phosphate. Its pathway is lipid metabolism; phospholipid metabolism. In terms of biological role, catalyzes the transfer of an acyl group from acyl-phosphate (acyl-PO(4)) to glycerol-3-phosphate (G3P) to form lysophosphatidic acid (LPA). This enzyme utilizes acyl-phosphate as fatty acyl donor, but not acyl-CoA or acyl-ACP. The protein is Glycerol-3-phosphate acyltransferase of Desulforamulus reducens (strain ATCC BAA-1160 / DSM 100696 / MI-1) (Desulfotomaculum reducens).